We begin with the raw amino-acid sequence, 213 residues long: Pyridoxine/pyridoxamine 5'-phosphate oxidase (213 aa).

Residues 8–11 (RREY) and Lys-66 each bind substrate. FMN is bound by residues 61-66 (RIVLLK), 76-77 (YT), Arg-82, Lys-83, and Gln-105. Tyr-123, Arg-127, and Ser-131 together coordinate substrate. FMN-binding positions include 140–141 (QS) and Trp-185. 191–193 (RLH) lines the substrate pocket. An FMN-binding site is contributed by Arg-195.

The protein belongs to the pyridoxamine 5'-phosphate oxidase family. As to quaternary structure, homodimer. It depends on FMN as a cofactor.

The catalysed reaction is pyridoxamine 5'-phosphate + O2 + H2O = pyridoxal 5'-phosphate + H2O2 + NH4(+). The enzyme catalyses pyridoxine 5'-phosphate + O2 = pyridoxal 5'-phosphate + H2O2. The protein operates within cofactor metabolism; pyridoxal 5'-phosphate salvage; pyridoxal 5'-phosphate from pyridoxamine 5'-phosphate: step 1/1. It participates in cofactor metabolism; pyridoxal 5'-phosphate salvage; pyridoxal 5'-phosphate from pyridoxine 5'-phosphate: step 1/1. Its function is as follows. Catalyzes the oxidation of either pyridoxine 5'-phosphate (PNP) or pyridoxamine 5'-phosphate (PMP) into pyridoxal 5'-phosphate (PLP). This Pseudoalteromonas atlantica (strain T6c / ATCC BAA-1087) protein is Pyridoxine/pyridoxamine 5'-phosphate oxidase.